The following is a 642-amino-acid chain: MPVITLPDGSQRHFDHAVSPMDVALDIGPGLAKATIAGRVNGELVDACDPIETDSTLSIITAKDEEGLEIIRHSCAHLLGHAIKQLWPNTKMAIGPVVDNGFYYDVDLDHTLTQEDIDALEKRMHELAEKNYDVIKKKVSWHEARETFVKRGETYKVSILDENIAHDDKPGLYHHEEYIDMCRGPHVPNMRFCHHFKLMKTAGAYWRGDSNNKMLQRIYGTAWADKKALNAYLQRLEEAAKRDHRKIGKQLDLYHMQEEAPGMVFWHNDGWTIFRELETFVRSKLKEYQYQEVKGPFMMDRVLWEKTGHWDNYKDAMFTTSSENREYCIKPMNCPGHVQIFNQGLKSYRDLPLRMAEFGSCHRNEPSGALHGLMRVRGFTQDDAHIFCTEDQVRDEVNACIRMVYDMYSTFGFEKIVVKLSTRPEKRIGSDETWDRAEADLAVALEENNIPFEYQLGEGAFYGPKIEFTLYDCLDRAWQCGTVQLDFSLPQRLSASYVGENNERQVPVMIHRAILGSLERFIGILTEEFAGFFPTWIAPVQVVVMNITDSQAEYVNELTRKLQNAGIRVKADLRNEKIGFKIREHTLRRVPYMLVCGDKEVEAGKVAVRTRRGKDLGSMDVSEVIEKLQQEIRSRSLQQLEE.

The 61-residue stretch at 1 to 61 (MPVITLPDGS…ETDSTLSIIT (61 aa)) folds into the TGS domain. The interval 243-534 (DHRKIGKQLD…LTEEFAGFFP (292 aa)) is catalytic. Residues Cys-334, His-385, and His-511 each coordinate Zn(2+).

It belongs to the class-II aminoacyl-tRNA synthetase family. In terms of assembly, homodimer. The cofactor is Zn(2+).

It localises to the cytoplasm. It catalyses the reaction tRNA(Thr) + L-threonine + ATP = L-threonyl-tRNA(Thr) + AMP + diphosphate + H(+). Its function is as follows. Catalyzes the attachment of threonine to tRNA(Thr) in a two-step reaction: L-threonine is first activated by ATP to form Thr-AMP and then transferred to the acceptor end of tRNA(Thr). Also edits incorrectly charged L-seryl-tRNA(Thr). This is Threonine--tRNA ligase from Klebsiella pneumoniae (strain 342).